The primary structure comprises 150 residues: D-aminoacyl-tRNA deacylase (150 aa).

Positions G138 to P139 match the Gly-cisPro motif, important for rejection of L-amino acids motif.

Belongs to the DTD family. Homodimer.

The protein localises to the cytoplasm. It carries out the reaction glycyl-tRNA(Ala) + H2O = tRNA(Ala) + glycine + H(+). The catalysed reaction is a D-aminoacyl-tRNA + H2O = a tRNA + a D-alpha-amino acid + H(+). Functionally, an aminoacyl-tRNA editing enzyme that deacylates mischarged D-aminoacyl-tRNAs. Also deacylates mischarged glycyl-tRNA(Ala), protecting cells against glycine mischarging by AlaRS. Acts via tRNA-based rather than protein-based catalysis; rejects L-amino acids rather than detecting D-amino acids in the active site. By recycling D-aminoacyl-tRNA to D-amino acids and free tRNA molecules, this enzyme counteracts the toxicity associated with the formation of D-aminoacyl-tRNA entities in vivo and helps enforce protein L-homochirality. The chain is D-aminoacyl-tRNA deacylase from Phocaeicola vulgatus (strain ATCC 8482 / DSM 1447 / JCM 5826 / CCUG 4940 / NBRC 14291 / NCTC 11154) (Bacteroides vulgatus).